The chain runs to 128 residues: Ribonuclease P protein component (128 aa).

This sequence belongs to the RnpA family. As to quaternary structure, consists of a catalytic RNA component (M1 or rnpB) and a protein subunit.

The catalysed reaction is Endonucleolytic cleavage of RNA, removing 5'-extranucleotides from tRNA precursor.. Its function is as follows. RNaseP catalyzes the removal of the 5'-leader sequence from pre-tRNA to produce the mature 5'-terminus. It can also cleave other RNA substrates such as 4.5S RNA. The protein component plays an auxiliary but essential role in vivo by binding to the 5'-leader sequence and broadening the substrate specificity of the ribozyme. The chain is Ribonuclease P protein component from Chromohalobacter salexigens (strain ATCC BAA-138 / DSM 3043 / CIP 106854 / NCIMB 13768 / 1H11).